The following is a 78-amino-acid chain: Large ribosomal subunit protein bL28 (78 aa).

A disordered region spans residues 1 to 20; sequence MSRVCQVTSKRPAVGNNRSH.

This sequence belongs to the bacterial ribosomal protein bL28 family.

The protein is Large ribosomal subunit protein bL28 of Haemophilus ducreyi (strain 35000HP / ATCC 700724).